The chain runs to 336 residues: E3 ubiquitin-protein ligase RING2 (336 aa).

The segment at 2 to 179 (TQTVQTNGVQ…AEDNGDSSHC (178 aa)) is interaction with HIP2. Residues 51–91 (CPICLDMLKNTMTTKECLHRFCADCIITALRSGNKECPTCR) form an RING-type zinc finger. Residues 93 to 98 (KLVSKR) are interaction with nucleosomes via an acidic patch on histone H2A and histone H2B. The tract at residues 158-218 (RGKKHQIENG…NATENGGGDI (61 aa)) is disordered. Positions 176–190 (SSHCSNASVHSNQEA) are enriched in polar residues.

Component of chromatin-associated Polycomb (PcG) complexes. Component of a PRC1-like complex. Component of some MLL1/MLL complex.

The protein resides in the nucleus. It localises to the cytoplasm. The protein localises to the chromosome. The catalysed reaction is S-ubiquitinyl-[E2 ubiquitin-conjugating enzyme]-L-cysteine + [acceptor protein]-L-lysine = [E2 ubiquitin-conjugating enzyme]-L-cysteine + N(6)-ubiquitinyl-[acceptor protein]-L-lysine.. It participates in protein modification; protein ubiquitination. Its function is as follows. E3 ubiquitin-protein ligase that mediates monoubiquitination of 'Lys-119' of histone H2A (H2AK119Ub), thereby playing a central role in histone code and gene regulation. H2AK119Ub gives a specific tag for epigenetic transcriptional repression. Essential component of a Polycomb group (PcG) multiprotein PRC1-like complex, a complex class required to maintain the transcriptionally repressive state of many genes, including Hox genes, throughout development. PcG PRC1 complex acts via chromatin remodeling and modification of histones, rendering chromatin heritably changed in its expressibility. This is E3 ubiquitin-protein ligase RING2 (rnf2) from Danio rerio (Zebrafish).